The following is a 514-amino-acid chain: Monocarboxylate transporter 10 (514 aa).

Positions 1–64 (MVPSQEEPAA…TGNQEPPEPP (64 aa)) are disordered. Residues 1–65 (MVPSQEEPAA…GNQEPPEPPE (65 aa)) lie on the Cytoplasmic side of the membrane. Residues 66–86 (GGWGWLVMLAAMWCNGSVFGI) form a helical membrane-spanning segment. The Extracellular portion of the chain corresponds to 87 to 113 (QNAYGVLFVSMLETFGAKDDDNMAFKA). The helical transmembrane segment at 114-134 (AWVGSLSMGMIFFCCPIVSVF) threads the bilayer. Residues 135 to 143 (TDMFGCRRT) are Cytoplasmic-facing. Residues 144–164 (AVLGAAVGFVGLMSSSFVSSI) traverse the membrane as a helical segment. Residues 165–170 (EPLYFT) lie on the Extracellular side of the membrane. A helical membrane pass occupies residues 171–191 (YGVVFACGCSFAYQPSLVILG). Residues 192 to 199 (HYFKKRLG) lie on the Cytoplasmic side of the membrane. Residues 200–220 (LVNGIVTAGSSVFTILLPLLL) traverse the membrane as a helical segment. At 221 to 227 (GNLTSTV) the chain is on the extracellular side. The helical transmembrane segment at 228–248 (GLCYTLRILCIFMFVLFLAGF) threads the bilayer. At 249–290 (TYRPLVPSSKEKESEDSRSSFFSRRKLSPPKKIFNFALFKET) the chain is on the cytoplasmic side. Residue Ser-262 is modified to Phosphoserine. A helical membrane pass occupies residues 291–311 (AYAVWAAGIPLALFGYFVPYV). Residues 312–328 (HLMNHVKERFKDVNNKE) are Extracellular-facing. The helical transmembrane segment at 329–349 (VLFMCIGVTSGVGRLLFGRIA) threads the bilayer. Position 350 (Asp-350) is a topological domain, cytoplasmic. The chain crosses the membrane as a helical span at residues 351–371 (YLPGVKKVYLQVLSFFFIGLT). The Extracellular portion of the chain corresponds to 372–395 (SMMIPLCSVFGALIALCLIMGLFD). The chain crosses the membrane as a helical span at residues 396-416 (GCFISIMAPIAFELVGPQDAS). Topologically, residues 417–418 (QA) are cytoplasmic. A helical membrane pass occupies residues 419–439 (IGFLLGFMSIPMTVGPPVAGL). Residues 440 to 450 (LHDKLGSYDLA) are Extracellular-facing. A helical membrane pass occupies residues 451–471 (FYLAGIPPFIGGAVLCLIPWI). Topologically, residues 472 to 514 (HSKKQREISKNTGGEKMEKMLANQSSLLSSSSGIFKKESDSII) are cytoplasmic. Ser-497, Ser-500, Ser-502, and Ser-503 each carry phosphoserine.

It belongs to the major facilitator superfamily. Monocarboxylate porter (TC 2.A.1.13) family. Not N-glycosylated. In terms of tissue distribution, strongly expressed in intestine, placenta and liver. In small intestine is detected in the basolateral membrane (at protein level).

Its subcellular location is the cell membrane. It is found in the basolateral cell membrane. It catalyses the reaction L-tryptophan(in) = L-tryptophan(out). The enzyme catalyses L-tyrosine(in) = L-tyrosine(out). It carries out the reaction L-phenylalanine(in) = L-phenylalanine(out). The catalysed reaction is 3,3',5-triiodo-L-thyronine(out) = 3,3',5-triiodo-L-thyronine(in). It catalyses the reaction L-thyroxine(out) = L-thyroxine(in). Functionally, sodium- and proton-independent thyroid hormones and aromatic acids transporter. Mediates both uptake and efflux of 3,5,3'-triiodothyronine (T3) and 3,5,3',5'-tetraiodothyronine (T4) with high affinity, suggesting a role in the homeostasis of thyroid hormone levels. Responsible for low affinity bidirectional transport of the aromatic amino acids, such as phenylalanine, tyrosine, tryptophan and L-3,4-dihydroxyphenylalanine (L-dopa). Plays an important role in homeostasis of aromatic amino acids. This chain is Monocarboxylate transporter 10 (Slc16a10), found in Rattus norvegicus (Rat).